The chain runs to 141 residues: Superoxide dismutase [Cu-Zn], chloroplastic (141 aa).

Positions 33, 35, and 50 each coordinate Cu cation. A disulfide bridge connects residues cysteine 44 and cysteine 133. Histidine 50, histidine 58, histidine 67, and aspartate 70 together coordinate Zn(2+). Histidine 107 is a binding site for Cu cation.

The protein belongs to the Cu-Zn superoxide dismutase family. As to quaternary structure, homotetramer. Cu cation is required as a cofactor. The cofactor is Zn(2+).

It localises to the plastid. Its subcellular location is the chloroplast. The catalysed reaction is 2 superoxide + 2 H(+) = H2O2 + O2. Functionally, destroys radicals which are normally produced within the cells and which are toxic to biological systems. The polypeptide is Superoxide dismutase [Cu-Zn], chloroplastic (SODCP) (Pinus sylvestris (Scotch pine)).